Here is a 74-residue protein sequence, read N- to C-terminus: Auswaprin-a (74 aa).

Positions 1 to 24 (MSSGGLLLLLGLLTLWGVLTPVSS) are cleaved as a signal peptide. One can recognise a WAP domain in the interval 27–71 (RPKKPGLCPPRPQKPCVKECKNDWSCSGQQKCCNYGCIDECRDPI). Cystine bridges form between Cys-34–Cys-59, Cys-42–Cys-63, Cys-46–Cys-58, and Cys-52–Cys-67.

This sequence belongs to the venom waprin family. Expressed by the venom gland.

The protein localises to the secreted. In terms of biological role, damages membranes of susceptible bacteria. Has no hemolytic activity. Not toxic to mice. Does not inhibit the proteinases elastase and cathepsin G. This is Auswaprin-a from Pseudechis australis (Mulga snake).